The following is a 510-amino-acid chain: Beta-galactosidase (510 aa).

Glu210 serves as the catalytic Proton donor. Glu414 serves as the catalytic Nucleophile.

This sequence belongs to the glycosyl hydrolase 1 family.

It catalyses the reaction Hydrolysis of terminal non-reducing beta-D-galactose residues in beta-D-galactosides.. This chain is Beta-galactosidase, found in Pyrococcus woesei.